A 569-amino-acid chain; its full sequence is Probable ABC transporter permease protein y4fN (569 aa).

13 helical membrane passes run 10–30, 68–88, 98–118, 121–141, 145–165, 196–216, 247–267, 304–324, 363–383, 395–415, 426–446, 480–500, and 534–554; these read VFYWLGLIVIAWAVLTFLLVP, VWMTAATTLTVTIVGMFQVAV, GFLKIAFSTPLVFGGVVAAAG, FTYGPSGAITAALAALFPSLP, FIGWFGVLFAHTFLMTSFHFL, VVLPVILPTVLAVTLLTLITA, PDMAALLALLMGLVLMGLILL, LAYLLAAIYLMPVALIVLFSF, MSSIAVAVGLAITLFAVPIMV, ICFVLPWIIPTMLLAVGLIVA, LVLLGSYWLLPIGYVIFSLPL, VVLPLVAPTAILVAGMKFNNL, and AAVSLVYVTLIMAFSLAVILI. Residues 64-268 form the ABC transmembrane type-1 1 domain; the sequence is LWNTVWMTAA…LVLMGLILLS (205 aa). The ABC transmembrane type-1 2 domain occupies 357–551; the sequence is FFNSMLMSSI…TLIMAFSLAV (195 aa).

This sequence belongs to the binding-protein-dependent transport system permease family. CysTW subfamily.

The protein localises to the cell inner membrane. Probably part of the binding-protein-dependent transport system y4fNOP. Probably responsible for the translocation of the substrate across the membrane. The polypeptide is Probable ABC transporter permease protein y4fN (Sinorhizobium fredii (strain NBRC 101917 / NGR234)).